The primary structure comprises 124 residues: Putative iron-sulfur cluster insertion protein ErpA (124 aa).

The iron-sulfur cluster site is built by C52, C116, and C118.

It belongs to the HesB/IscA family. Homodimer. Iron-sulfur cluster is required as a cofactor.

Its function is as follows. Required for insertion of 4Fe-4S clusters. The sequence is that of Putative iron-sulfur cluster insertion protein ErpA from Ralstonia pickettii (strain 12J).